A 130-amino-acid polypeptide reads, in one-letter code: Small ribosomal subunit protein uS9 (130 aa).

The protein belongs to the universal ribosomal protein uS9 family.

This chain is Small ribosomal subunit protein uS9, found in Cupriavidus necator (strain ATCC 17699 / DSM 428 / KCTC 22496 / NCIMB 10442 / H16 / Stanier 337) (Ralstonia eutropha).